We begin with the raw amino-acid sequence, 383 residues long: BRISC and BRCA1-A complex member 2 (383 aa).

Methionine 1 is modified (N-acetylmethionine). Serine 2 bears the Phosphoserine mark. 2 UEV-like regions span residues 30–147 (DATN…TLLE) and 275–364 (IAAF…RAKA).

It belongs to the BABAM2 family. Component of the ARISC complex, at least composed of UIMC1/RAP80, ABRAXAS1, BRCC3/BRCC36, BABAM2 and BABAM1/NBA1. Component of the BRCA1-A complex, at least composed of BRCA1, BARD1, UIMC1/RAP80, ABRAXAS1, BRCC3/BRCC36, BABAM2 and BABAM1/NBA1. In the BRCA1-A complex, interacts directly with ABRAXAS1, BRCC3/BRCC36 and BABAM1/NBA1. Binds polyubiquitin. Component of the BRISC complex, at least composed of ABRAXAS2, BRCC3/BRCC36, BABAM2 and BABAM1/NBA1. Identified in a complex with SHMT2 and the other subunits of the BRISC complex. Component of the BRCA1/BRCA2 containing complex (BRCC), which also contains BRCA1, BRCA2, BARD1, BRCC3/BRCC36 and RAD51. BRCC is a ubiquitin E3 ligase complex that enhances cellular survival following DNA damage. May interact with FAS and TNFRSF1A.

It is found in the cytoplasm. It localises to the nucleus. Component of the BRCA1-A complex, a complex that specifically recognizes 'Lys-63'-linked ubiquitinated histones H2A and H2AX at DNA lesions sites, leading to target the BRCA1-BARD1 heterodimer to sites of DNA damage at double-strand breaks (DSBs). The BRCA1-A complex also possesses deubiquitinase activity that specifically removes 'Lys-63'-linked ubiquitin on histones H2A and H2AX. In the BRCA1-A complex, it acts as an adapter that bridges the interaction between BABAM1/NBA1 and the rest of the complex, thereby being required for the complex integrity and modulating the E3 ubiquitin ligase activity of the BRCA1-BARD1 heterodimer. Component of the BRISC complex, a multiprotein complex that specifically cleaves 'Lys-63'-linked ubiquitin in various substrates. Within the BRISC complex, acts as an adapter that bridges the interaction between BABAM1/NBA1 and the rest of the complex, thereby being required for the complex integrity. The BRISC complex is required for normal mitotic spindle assembly and microtubule attachment to kinetochores via its role in deubiquitinating NUMA1. The BRISC complex plays a role in interferon signaling via its role in the deubiquitination of the interferon receptor IFNAR1; deubiquitination increases IFNAR1 activity by enhancing its stability and cell surface expression. Down-regulates the response to bacterial lipopolysaccharide (LPS) via its role in IFNAR1 deubiquitination. May play a role in homeostasis or cellular differentiation in cells of neural, epithelial and germline origins. May also act as a death receptor-associated anti-apoptotic protein, which inhibits the mitochondrial apoptotic pathway. May regulate TNF-alpha signaling through its interactions with TNFRSF1A; however these effects may be indirect. This chain is BRISC and BRCA1-A complex member 2 (BABAM2), found in Pongo abelii (Sumatran orangutan).